The chain runs to 217 residues: Probable transaldolase (217 aa).

The active-site Schiff-base intermediate with substrate is the lysine 83.

Belongs to the transaldolase family. Type 3B subfamily.

The protein resides in the cytoplasm. It catalyses the reaction D-sedoheptulose 7-phosphate + D-glyceraldehyde 3-phosphate = D-erythrose 4-phosphate + beta-D-fructose 6-phosphate. It functions in the pathway carbohydrate degradation; pentose phosphate pathway; D-glyceraldehyde 3-phosphate and beta-D-fructose 6-phosphate from D-ribose 5-phosphate and D-xylulose 5-phosphate (non-oxidative stage): step 2/3. Functionally, transaldolase is important for the balance of metabolites in the pentose-phosphate pathway. The polypeptide is Probable transaldolase (tal) (Aquifex aeolicus (strain VF5)).